A 137-amino-acid polypeptide reads, in one-letter code: Crustacean hyperglycemic hormones (137 aa).

The first 28 residues, 1 to 28, serve as a signal peptide directing secretion; it reads MVSFRTMWSLVVVVVVVAASLGSSGVHG. At Q64 the chain carries Pyrrolidone carboxylic acid. A D-phenylalanine; in form CHH-II modification is found at F66. 3 disulfide bridges follow: C70–C106, C86–C102, and C89–C115. A Valine amide modification is found at V135.

The protein belongs to the arthropod CHH/MIH/GIH/VIH hormone family. Produced by the medulla terminalis X-organ in the eyestalks and transported to the sinus gland where they are stored and released.

Its subcellular location is the secreted. Hormone found in the sinus gland of isopods and decapods which controls the blood sugar level. Has a secretagogue action over the amylase released from the midgut gland. May act as a stress hormone and may be involved in the control of molting and reproduction. This Procambarus clarkii (Red swamp crayfish) protein is Crustacean hyperglycemic hormones.